We begin with the raw amino-acid sequence, 293 residues long: MSYNGIGLPTPRGSGTNGYVMRNLSHVKKYDKNTNLQSNRNAKALEKRVQDPSISEHECRRQIESKLLLYREQLLEEVSSQHSTDAAASDSNTNFGTENPKPPKAIIKDEQSQSKTKSLDEADVEILVQKYREQLLKELQLQKSTEKGKNFESILQPQKRKETRGFHSKNDDDGRLEERDDLRSSVDDDYYDYPRYSERKSLNSKRHVDNYNENRRRHYDSYSSYDELERRRSSNESYSRRSELPRRDYNRHDERERYSYHRRRERSNSPSYTKNESIPVVDRDSSPEGGEIV.

3 disordered regions span residues 30-52 (YDKN…VQDP), 80-119 (SQHS…TKSL), and 146-293 (EKGK…GEIV). Over residues 43–52 (KALEKRVQDP) the composition is skewed to basic and acidic residues. Positions 55–98 (SEHECRRQIESKLLLYREQLLEEVSSQHSTDAAASDSNTNFGTE) constitute a CWF21 domain. Residues 80–97 (SQHSTDAAASDSNTNFGT) show a composition bias toward polar residues. 4 stretches are compositionally biased toward basic and acidic residues: residues 106 to 119 (IIKD…TKSL), 159 to 186 (KRKE…RSSV), 195 to 214 (RYSE…YNEN), and 227 to 259 (ELER…ERYS). Serine 118 carries the phosphoserine modification. A phosphoserine mark is found at serine 285 and serine 286.

It belongs to the CWC21 family. As to quaternary structure, belongs to the 40S cdc5-associated complex (or cwf complex), a spliceosome sub-complex reminiscent of a late-stage spliceosome composed of the U2, U5 and U6 snRNAs and at least brr2, cdc5, cwf2/prp3, cwf3/syf1, cwf4/syf3, cwf5/ecm2, spp42/cwf6, cwf7/spf27, cwf8, cwf9, cwf10, cwf11, cwf12, prp45/cwf13, cwf14, cwf15, cwf16, cwf17, cwf18, cwf19, cwf20, cwf21, cwf22, cwf23, cwf24, cwf25, cwf26, cyp7/cwf27, cwf28, cwf29/ist3, lea1, msl1, prp5/cwf1, prp10, prp12/sap130, prp17, prp22, sap61, sap62, sap114, sap145, slu7, smb1, smd1, smd3, smf1, smg1 and syf2.

The protein localises to the cytoplasm. Its subcellular location is the nucleus. Functionally, involved in pre-mRNA splicing. May function at or prior to the first catalytic step of splicing at the catalytic center of the spliceosome. May do so by stabilizing the catalytic center or the position of the RNA substrate. In Schizosaccharomyces pombe (strain 972 / ATCC 24843) (Fission yeast), this protein is Pre-mRNA-splicing factor cwf21 (cwf21).